Consider the following 231-residue polypeptide: UPF0702 transmembrane protein YetF (231 aa).

3 helical membrane-spanning segments follow: residues Leu-5 to Leu-25, Ile-33 to Tyr-53, and Ile-59 to Ile-79.

Belongs to the UPF0702 family.

The protein resides in the cell membrane. This chain is UPF0702 transmembrane protein YetF (yetF), found in Bacillus subtilis (strain 168).